We begin with the raw amino-acid sequence, 804 residues long: Lon protease (804 aa).

Residues 1 to 23 (MSADSENETSESSPAGEATASTS) form a disordered region. The 195-residue stretch at 30 to 224 (LILLPVRNAV…KVLDAVAGRI (195 aa)) folds into the Lon N-terminal domain. 376 to 383 (GPPGVGKT) contributes to the ATP binding site. One can recognise a Lon proteolytic domain in the interval 612-793 (TSLPGVVTGL…DDAVREIIED (182 aa)). Active-site residues include Ser699 and Lys742.

The protein belongs to the peptidase S16 family. In terms of assembly, homohexamer. Organized in a ring with a central cavity.

The protein localises to the cytoplasm. It carries out the reaction Hydrolysis of proteins in presence of ATP.. In terms of biological role, ATP-dependent serine protease that mediates the selective degradation of mutant and abnormal proteins as well as certain short-lived regulatory proteins. Required for cellular homeostasis and for survival from DNA damage and developmental changes induced by stress. Degrades polypeptides processively to yield small peptide fragments that are 5 to 10 amino acids long. Binds to DNA in a double-stranded, site-specific manner. This Paraburkholderia phytofirmans (strain DSM 17436 / LMG 22146 / PsJN) (Burkholderia phytofirmans) protein is Lon protease.